Consider the following 360-residue polypeptide: Iron uptake protein A1 (360 aa).

The signal sequence occupies residues 1-28; it reads MVQKLSRRLFLSIGTAFTVVVGSQLLSS. Residue C29 is the site of N-palmitoyl cysteine attachment. C29 is lipidated: S-diacylglycerol cysteine. Residues H54, Y55, Y185, Y241, and Y242 each contribute to the Fe cation site.

This sequence belongs to the bacterial solute-binding protein 1 family.

It localises to the cellular thylakoid membrane. It is found in the cell membrane. Its function is as follows. Plays an important role in protecting the acceptor side of photosystem II (PSII) against oxidative damage, especially under iron-limiting growth conditions. The differing subcellular locations of futA1 (predominantly thylakoid lumen) and futA2 (predominantly periplasmic) suggest they may fulfill different roles. A major iron-binding protein involved in Fe(3+) uptake, probably part of a periplasmic ABC transporter complex futA1A2BC (TC 3.A.1.10.2) involved in Fe(3+) ion import (ferric iron). This protein and futA2 (slr0531) may be subunit proteins that have redundant or overlapping substrate-binding functions. The sequence is that of Iron uptake protein A1 (futA1) from Synechocystis sp. (strain ATCC 27184 / PCC 6803 / Kazusa).